The primary structure comprises 263 residues: Complement C1q tumor necrosis factor-related protein 6 (263 aa).

The signal sequence occupies residues 1–24 (MRVIMGTASLGSIWAVFLLPLVFG). N76 is a glycosylation site (N-linked (GlcNAc...) asparagine). The tract at residues 80 to 123 (LKGDKGDRGPSGTPGKPGKNGTRGDRGSQGIKGDKGQAGSPGSS) is disordered. Residues 82–123 (GDKGDRGPSGTPGKPGKNGTRGDRGSQGIKGDKGQAGSPGSS) enclose the Collagen-like domain. The C1q domain maps to 124 to 263 (CQTHYSAFSV…SGHLIKAEDN (140 aa)).

The protein localises to the secreted. This is Complement C1q tumor necrosis factor-related protein 6 (C1qtnf6) from Rattus norvegicus (Rat).